Here is a 523-residue protein sequence, read N- to C-terminus: Ribonuclease Y (523 aa).

The chain crosses the membrane as a helical span at residues 7–24; it reads LSSLASALLAGGGTYLVY. Positions 213–279 constitute a KH domain; it reads LINVVNLPND…TRTIEALVED (67 aa). One can recognise an HD domain in the interval 339 to 432; the sequence is ALGHSLEVAN…VCAADALSAA (94 aa).

Belongs to the RNase Y family.

The protein localises to the cell membrane. Its function is as follows. Endoribonuclease that initiates mRNA decay. This chain is Ribonuclease Y, found in Wolinella succinogenes (strain ATCC 29543 / DSM 1740 / CCUG 13145 / JCM 31913 / LMG 7466 / NCTC 11488 / FDC 602W) (Vibrio succinogenes).